Here is a 594-residue protein sequence, read N- to C-terminus: CRISPR-associated DNA-binding protein Cas12m (594 aa).

The segment at 1 to 85 (MSRLEARTRY…EKVRQVMVFE (85 aa)) is recognition domain (REC1-N). The segment at 86-153 (SETTKKIKEL…ERSFIFEARK (68 aa)) is recognition domain (REC2). The tract at residues 154-211 (QELAQLEKERWAVVKELGKGSGLYWCNLEDVVNSYDIGRKKAKAAGGEMRFHRWDGTG) is recognition domain (REC1-C). Residues 212–314 (KVTVRFQKGL…RYKLNLVLEI (103 aa)) are wedge domain (WED). Residues 315-329 (LGENTNRILPALEGT) are linker. Residues 330–540 (AAIDLGWRTV…KNHVEFTYVP (211 aa)) are ruvC-I. Positions 541–575 (AENTTITCHKCGHKEKFDAAAQIIHTCSTCGELWD) are target nucleic-acid binding (TNB). Positions 548, 551, 567, and 570 each coordinate Zn(2+). Residues 576 to 594 (QDYNAAKNLLAFSQKGGVK) form a ruvC-II region. Mg(2+) is bound at residue Asp577.

This sequence belongs to the CRISPR-associated DNA-binding protein Cas12m family. The cofactor is Mg(2+). Zn(2+) is required as a cofactor.

CRISPR (clustered regularly interspaced short palindromic repeat), is an adaptive immune system that provides protection against mobile genetic elements (viruses, transposable elements and conjugative plasmids). CRISPR clusters contain sequences complementary to antecedent mobile elements and target invading nucleic acids. CRISPR clusters are transcribed and processed into CRISPR RNA (crRNA). Recognizes a short motif in the CRISPR repeat sequences (the 5' PAM or protospacer adjacent motif, 5'-C/TCN-3' in this organism) to help distinguish self versus nonself, as targets within the bacterial CRISPR locus do not have PAMs. Upon expression in E.coli as a CRISPR locus inhibits plasmid propagation when targeted to regions essential for plasmid propagation (replication origin but not a selectable marker), probably by inhibiting transcription. Cas12m-crRNA binds DNA in a PAM-dependent, crRNA-guided fashion. Upon expression in E.coli as a CRISPR region preferentially binds to its associated crRNA. Probably required for pre-crRNA processing to mature crRNA. The chain is CRISPR-associated DNA-binding protein Cas12m from Thermanaerosceptrum fracticalcis.